Here is a 98-residue protein sequence, read N- to C-terminus: NADH-ubiquinone oxidoreductase chain 4L (98 aa).

A run of 3 helical transmembrane segments spans residues 1 to 21 (MPLI…GMLV), 29 to 49 (SLLC…LMTL), and 58 to 78 (IVPI…LALL).

It belongs to the complex I subunit 4L family. In terms of assembly, core subunit of respiratory chain NADH dehydrogenase (Complex I) which is composed of 45 different subunits.

The protein resides in the mitochondrion inner membrane. It catalyses the reaction a ubiquinone + NADH + 5 H(+)(in) = a ubiquinol + NAD(+) + 4 H(+)(out). In terms of biological role, core subunit of the mitochondrial membrane respiratory chain NADH dehydrogenase (Complex I) which catalyzes electron transfer from NADH through the respiratory chain, using ubiquinone as an electron acceptor. Part of the enzyme membrane arm which is embedded in the lipid bilayer and involved in proton translocation. In Pan paniscus (Pygmy chimpanzee), this protein is NADH-ubiquinone oxidoreductase chain 4L (MT-ND4L).